The chain runs to 121 residues: Large ribosomal subunit protein uL14 (121 aa).

This sequence belongs to the universal ribosomal protein uL14 family. As to quaternary structure, part of the 50S ribosomal subunit. Forms a cluster with proteins L3 and L19. In the 70S ribosome, L14 and L19 interact and together make contacts with the 16S rRNA in bridges B5 and B8.

Binds to 23S rRNA. Forms part of two intersubunit bridges in the 70S ribosome. This chain is Large ribosomal subunit protein uL14, found in Phocaeicola vulgatus (strain ATCC 8482 / DSM 1447 / JCM 5826 / CCUG 4940 / NBRC 14291 / NCTC 11154) (Bacteroides vulgatus).